A 185-amino-acid chain; its full sequence is Ribosome-recycling factor (185 aa).

It belongs to the RRF family.

The protein resides in the cytoplasm. Its function is as follows. Responsible for the release of ribosomes from messenger RNA at the termination of protein biosynthesis. May increase the efficiency of translation by recycling ribosomes from one round of translation to another. The protein is Ribosome-recycling factor of Buchnera aphidicola subsp. Acyrthosiphon pisum (strain Tuc7).